The primary structure comprises 342 residues: Cytoplasmic tRNA 2-thiolation protein 1 (342 aa).

This sequence belongs to the TtcA family. CTU1/NCS6/ATPBD3 subfamily.

It localises to the cytoplasm. The protein operates within tRNA modification; 5-methoxycarbonylmethyl-2-thiouridine-tRNA biosynthesis. In terms of biological role, plays a central role in 2-thiolation of mcm(5)S(2)U at tRNA wobble positions of tRNA(Lys), tRNA(Glu) and tRNA(Gln). Directly binds tRNAs and probably acts by catalyzing adenylation of tRNAs, an intermediate required for 2-thiolation. It is unclear whether it acts as a sulfurtransferase that transfers sulfur from thiocarboxylated URM1 onto the uridine of tRNAs at wobble position. The chain is Cytoplasmic tRNA 2-thiolation protein 1 from Anopheles gambiae (African malaria mosquito).